The sequence spans 91 residues: Non-specific lipid-transfer protein 1 (91 aa).

4 disulfides stabilise this stretch: Cys3-Cys50, Cys13-Cys27, Cys28-Cys73, and Cys48-Cys87.

This sequence belongs to the plant LTP family.

Functionally, plant non-specific lipid-transfer proteins transfer phospholipids as well as galactolipids across membranes. May play a role in wax or cutin deposition in the cell walls of expanding epidermal cells and certain secretory tissues. The sequence is that of Non-specific lipid-transfer protein 1 from Prunus domestica (Garden plum).